A 922-amino-acid polypeptide reads, in one-letter code: Disintegrin and metalloproteinase domain-containing protein 10 homolog (922 aa).

Residues 1 to 26 (MSSPIRNRLQLVVTLIFCLFFENVNG) form the signal peptide. Positions 27-228 (LNNFIDNFET…YMTMGGRSKR (202 aa)) are excised as a propeptide. Residues asparagine 74, asparagine 185, and asparagine 346 are each glycosylated (N-linked (GlcNAc...) asparagine). The Extracellular portion of the chain corresponds to 229–745 (ANTLRDHDGL…ETLTQWAQDN (517 aa)). The Peptidase M12B domain maps to 242–480 (RTCSLYMQAD…CSVKNISAVL (239 aa)). Histidine 426 is a Zn(2+) binding site. Glutamate 427 is an active-site residue. Zn(2+)-binding residues include histidine 430 and histidine 436. A disulfide bridge connects residues cysteine 442 and cysteine 471. Residue asparagine 475 is glycosylated (N-linked (GlcNAc...) asparagine). A Disintegrin domain is found at 511–615 (SAFCGNQIYE…QCPVSPPKHD (105 aa)). Disulfide bonds link cysteine 542/cysteine 577, cysteine 564/cysteine 572, cysteine 588/cysteine 607, cysteine 594/cysteine 626, and cysteine 619/cysteine 631. N-linked (GlcNAc...) asparagine glycosylation is present at asparagine 632. Disulfide bonds link cysteine 636–cysteine 659, cysteine 644–cysteine 665, cysteine 655–cysteine 707, and cysteine 700–cysteine 713. The N-linked (GlcNAc...) asparagine glycan is linked to asparagine 677. A helical transmembrane segment spans residues 746–766 (WWVVGVGGLVFLVIMALFVKC). Over 767-922 (CAVHTPSTNP…SGNGGKKKGK (156 aa)) the chain is Cytoplasmic. Disordered stretches follow at residues 797-837 (QHRQ…PSAP) and 864-922 (PGSS…KKGK). Positions 805–834 (AAGSVPPGPGAQPRSGAASAPSRTTPSARP) are enriched in low complexity.

As to quaternary structure, may interact with tetraspanin tsp-12; the interaction promotes sup-17 cell membrane localization. Zn(2+) serves as cofactor. In terms of tissue distribution, expressed in the germline.

The protein localises to the cell membrane. It localises to the basolateral cell membrane. Its subcellular location is the cytoplasmic vesicle membrane. The catalysed reaction is Endopeptidase of broad specificity.. Functionally, metalloprotease. Acts together with protease adm-4 and in a cell autonomous manner to facilitate lin-12/Notch signaling during developmental cell fate decision, including anchor cell/ventral uterine precursor cell decision and vulva precursor cell specification. By modulating glp-1/Notch signaling, plays a role in germline development. Probably by modulating BMP-like Sma/Mab signaling via the shedding of unc-40 ectodomain, involved in the regulation of body size and mesoderm development. Probably by shedding ephrin efn-4, regulates axon guidance of SDQL neuron during development. This Caenorhabditis elegans protein is Disintegrin and metalloproteinase domain-containing protein 10 homolog.